Consider the following 312-residue polypeptide: Formate dehydrogenase iron-sulfur subunit (312 aa).

4 4Fe-4S ferredoxin-type domains span residues 35–65 (IAKL…SDIN), 97–129 (LEWL…QYAN), 130–159 (GIVD…MNPE), and 164–195 (YKCT…FGSK). Residues cysteine 44, cysteine 47, cysteine 50, cysteine 54, cysteine 106, cysteine 109, cysteine 114, cysteine 118, cysteine 139, cysteine 142, cysteine 145, cysteine 149, cysteine 166, cysteine 169, cysteine 181, and cysteine 185 each contribute to the [4Fe-4S] cluster site.

Formate dehydrogenase is a membrane-bound complex, formed by subunits alpha, beta and gamma. [4Fe-4S] cluster serves as cofactor.

The protein resides in the cell membrane. In terms of biological role, allows to use formate as major electron donor during aerobic respiration. The beta chain is an electron transfer unit containing 4 cysteine clusters involved in the formation of iron-sulfur centers. Electrons are transferred from the gamma chain to the molybdenum cofactor of the alpha subunit. This is Formate dehydrogenase iron-sulfur subunit (fdxH) from Haemophilus influenzae (strain ATCC 51907 / DSM 11121 / KW20 / Rd).